A 461-amino-acid polypeptide reads, in one-letter code: L-seryl-tRNA(Sec) selenium transferase (461 aa).

Residue K294 is modified to N6-(pyridoxal phosphate)lysine.

The protein belongs to the SelA family. Pyridoxal 5'-phosphate is required as a cofactor.

It is found in the cytoplasm. The enzyme catalyses L-seryl-tRNA(Sec) + selenophosphate + H(+) = L-selenocysteinyl-tRNA(Sec) + phosphate. It functions in the pathway aminoacyl-tRNA biosynthesis; selenocysteinyl-tRNA(Sec) biosynthesis; selenocysteinyl-tRNA(Sec) from L-seryl-tRNA(Sec) (bacterial route): step 1/1. In terms of biological role, converts seryl-tRNA(Sec) to selenocysteinyl-tRNA(Sec) required for selenoprotein biosynthesis. The sequence is that of L-seryl-tRNA(Sec) selenium transferase from Haemophilus influenzae (strain PittEE).